Here is a 153-residue protein sequence, read N- to C-terminus: Endoribonuclease YbeY (153 aa).

His114, His118, and His124 together coordinate Zn(2+).

It belongs to the endoribonuclease YbeY family. Zn(2+) is required as a cofactor.

The protein localises to the cytoplasm. Single strand-specific metallo-endoribonuclease involved in late-stage 70S ribosome quality control and in maturation of the 3' terminus of the 16S rRNA. The protein is Endoribonuclease YbeY of Shewanella baltica (strain OS195).